We begin with the raw amino-acid sequence, 293 residues long: Ankyrin repeat and SOCS box protein 11 (293 aa).

7 ANK repeats span residues 36–65 (DDRTPLHDAALQGRLLPLRRLLSQGYNVGM), 69–98 (DGITALHEACVGGHFTCAKLLLEHGADANA), 102–131 (DGATPLFSACCSGNPALVSLILTHSSAHHP), 134–163 (LLCSPLHEAAKRGHTACVELLLSHGVNVDM), 167–196 (SVGTALYCACEVKSTDCVLTLLILGADVQC), 199–228 (GLDTPLHAACRVGGAKEAELLLEHGADRTS), and 232–259 (EGKTPLDLTSDQSIKHLLQTAGTCSLSQ). The region spanning 244–293 (SIKHLLQTAGTCSLSQLCRWCIRRSLGQKGLNKTKTLCLPHMLHNYLLYH) is the SOCS box domain.

It belongs to the ankyrin SOCS box (ASB) family. In terms of assembly, substrate-recognition component of the ECS(ASB11) complex, composed of asb11, cul5, elob, eloc and rnf7/rbx2. Expressed in the developing nervous system: localizes to neural plate margins and is abutting the proneuronal zone.

It is found in the endoplasmic reticulum. The protein operates within protein modification; protein ubiquitination. Its function is as follows. Substrate-recognition component of a cullin-5-RING E3 ubiquitin-protein ligase complex (ECS complex, also named CRL5 complex), which mediates the ubiquitination and subsequent proteasomal degradation of target proteins. Acts as a regulator of the neuronal progenitor compartment size by maintaining the neural precursors in the proliferating undifferentiated state. The ECS(ASB11) complex acts as a positive regulator of Notch signaling pathway by mediating ubiquitination and degradation of DeltaA (dla). Also acts as a regulator of regenerative myogenesis. This Danio rerio (Zebrafish) protein is Ankyrin repeat and SOCS box protein 11.